The following is a 389-amino-acid chain: Chalcone synthase 5 (389 aa).

Cys-164 is a catalytic residue.

Belongs to the thiolase-like superfamily. Chalcone/stilbene synthases family.

The enzyme catalyses (E)-4-coumaroyl-CoA + 3 malonyl-CoA + 3 H(+) = 2',4,4',6'-tetrahydroxychalcone + 3 CO2 + 4 CoA. It functions in the pathway secondary metabolite biosynthesis; flavonoid biosynthesis. Its function is as follows. The primary product of this enzyme is 4,2',4',6'-tetrahydroxychalcone (also termed naringenin-chalcone or chalcone) which can under specific conditions spontaneously isomerize into naringenin. This is Chalcone synthase 5 (CHS5) from Trifolium subterraneum (Subterranean clover).